The sequence spans 501 residues: MTQAILQLSEIEKAFPGVKALDKASLNVYPGRVMALMGENGAGKSTLMKVLTGIYHMDAGSIQYQGQPAAFKGPRDSQEAGISIIHQELNLIPELTIAENIFLGREFTGSMGRIQWSKMYAEADRLLQRLNVKHSSKTLLGDLSLGEQQMVEIAKALSFESKVIIMDEPTDALTDTETESLFKVINELREQGCGIVYISHRLKEIFEICDDITVLRDGKFIGECRVADTDEDGLIEMMVGRKLEEQYPRIDVKHGETCLEVVGLTGSGVHDVSFTLKRGEILGISGLMGAGRTELMKVIYGALPSEHGVINLDNKTINPVSPQDGLANGIAYISEDRKGDGLVLGLSVKENMSLCALDKLTKGVQIQHGEEVIAVEDFIKLFNIKTPTRDQIIGNLSGGNQQKVAIAKGLMTKPKVLILDEPTRGVDVGAKKEIYQLINKFKADGMSIILVSSEMPEVLGMSDRILVMHEGRITGEFDAKDADQEKLLACAVGKKINEEAA.

ABC transporter domains follow at residues 6-242 (LQLS…VGRK) and 253-495 (KHGE…VGKK). Position 38 to 45 (38 to 45 (GENGAGKS)) interacts with ATP.

This sequence belongs to the ABC transporter superfamily. Ribose importer (TC 3.A.1.2.1) family. The complex is composed of an ATP-binding protein (RbsA), two transmembrane proteins (RbsC) and a solute-binding protein (RbsB).

It is found in the cell inner membrane. It catalyses the reaction D-ribose(out) + ATP + H2O = D-ribose(in) + ADP + phosphate + H(+). Its function is as follows. Part of the ABC transporter complex RbsABC involved in ribose import. Responsible for energy coupling to the transport system. This chain is Ribose import ATP-binding protein RbsA, found in Vibrio parahaemolyticus serotype O3:K6 (strain RIMD 2210633).